Here is a 619-residue protein sequence, read N- to C-terminus: Protein CPn_1016/CP_0837/CPj1016/CpB1054 (619 aa).

Positions 591–619 (NAKKSEEQTSPQETPEVIRVSYPTTTSAL) are disordered.

This sequence belongs to the chlamydial CPn_1016/CT_858/TC_0248 family.

This Chlamydia pneumoniae (Chlamydophila pneumoniae) protein is Protein CPn_1016/CP_0837/CPj1016/CpB1054.